A 507-amino-acid chain; its full sequence is ATP synthase subunit alpha 2 (507 aa).

171–178 (GDRATGKT) contributes to the ATP binding site.

Belongs to the ATPase alpha/beta chains family. As to quaternary structure, F-type ATPases have 2 components, CF(1) - the catalytic core - and CF(0) - the membrane proton channel. CF(1) has five subunits: alpha(3), beta(3), gamma(1), delta(1), epsilon(1). CF(0) has three main subunits: a(1), b(2) and c(9-12). The alpha and beta chains form an alternating ring which encloses part of the gamma chain. CF(1) is attached to CF(0) by a central stalk formed by the gamma and epsilon chains, while a peripheral stalk is formed by the delta and b chains.

Its subcellular location is the cell inner membrane. It carries out the reaction ATP + H2O + 4 H(+)(in) = ADP + phosphate + 5 H(+)(out). Its function is as follows. Produces ATP from ADP in the presence of a proton gradient across the membrane. The alpha chain is a regulatory subunit. The sequence is that of ATP synthase subunit alpha 2 from Gluconobacter oxydans (strain 621H) (Gluconobacter suboxydans).